Here is a 304-residue protein sequence, read N- to C-terminus: uncharacterized protein (304 aa).

Position 72 to 79 (72 to 79) interacts with ATP; sequence GPTGSGKT.

It belongs to the CbbQ/NirQ/NorQ/GpvN family.

This is an uncharacterized protein from Bacillus subtilis (strain 168).